A 352-amino-acid polypeptide reads, in one-letter code: Ion-translocating oxidoreductase complex subunit D (352 aa).

The next 4 helical transmembrane spans lie at 20-40 (IMLLVVIAALPGIAAQTWFFG), 42-62 (GTLFQIVLAAITALVAEAIVL), 69-91 (VASHLQDYSALLTGLLLAVSIPP), and 123-143 (PAMIGYVVLLISFPVQMTSWL). T187 is modified (FMN phosphoryl threonine). The next 5 helical transmembrane spans lie at 215-235 (LAGVGWQWVNLAWLVGGVFLL), 242-262 (WHIPVSFLLTLALCAALGWLF), 267-287 (LASPQLHLLSGATMLGAFFIL), 301-321 (LIFGALAGVLVWLIRSFGGYP), and 322-342 (DGVAFAVLLANITVPLIDYYT).

The protein belongs to the NqrB/RnfD family. As to quaternary structure, the complex is composed of six subunits: RsxA, RsxB, RsxC, RsxD, RsxE and RsxG. The cofactor is FMN.

The protein resides in the cell inner membrane. Its function is as follows. Part of a membrane-bound complex that couples electron transfer with translocation of ions across the membrane. Required to maintain the reduced state of SoxR. The chain is Ion-translocating oxidoreductase complex subunit D from Salmonella enteritidis PT4 (strain P125109).